Here is a 222-residue protein sequence, read N- to C-terminus: Superoxide dismutase [Mn], mitochondrial (222 aa).

A mitochondrion-targeting transit peptide spans 1–24 (MLCRAACSAGRRLGPAASTAGSRH). His-50 serves as a coordination point for Mn(2+). At Tyr-58 the chain carries 3'-nitrotyrosine. An N6-acetyllysine; alternate mark is found at Lys-68 and Lys-75. N6-succinyllysine; alternate is present on residues Lys-68 and Lys-75. Position 98 (His-98) interacts with Mn(2+). The residue at position 114 (Lys-114) is an N6-acetyllysine. 2 positions are modified to N6-acetyllysine; alternate: Lys-122 and Lys-130. Residues Lys-122 and Lys-130 each carry the N6-succinyllysine; alternate modification. Asp-183 and His-187 together coordinate Mn(2+). Position 202 is an N6-acetyllysine (Lys-202).

The protein belongs to the iron/manganese superoxide dismutase family. In terms of assembly, homotetramer. Mn(2+) serves as cofactor. Nitrated under oxidative stress. Nitration coupled with oxidation inhibits the catalytic activity. Post-translationally, acetylation at Lys-122 decreases enzymatic activity. Deacetylated by SIRT3 upon exposure to ionizing radiations or after long fasting. In terms of processing, polyubiquitinated; leading to proteasomal degradation. Deubiquitinated by USP36 which increases protein stability.

Its subcellular location is the mitochondrion matrix. The enzyme catalyses 2 superoxide + 2 H(+) = H2O2 + O2. Destroys superoxide anion radicals which are normally produced within the cells and which are toxic to biological systems. The protein is Superoxide dismutase [Mn], mitochondrial (Sod2) of Rattus norvegicus (Rat).